The sequence spans 137 residues: Small ribosomal subunit protein uS12 (137 aa).

3-methylthioaspartic acid is present on Asp89. Residues 104–137 (TAGVNGRKQSRSKYGAKRPKPGQAAAAPAKGKKK) form a disordered region. Basic residues predominate over residues 111-123 (KQSRSKYGAKRPK). The segment covering 124 to 137 (PGQAAAAPAKGKKK) has biased composition (low complexity).

Belongs to the universal ribosomal protein uS12 family. Part of the 30S ribosomal subunit. Contacts proteins S8 and S17. May interact with IF1 in the 30S initiation complex.

In terms of biological role, with S4 and S5 plays an important role in translational accuracy. Functionally, interacts with and stabilizes bases of the 16S rRNA that are involved in tRNA selection in the A site and with the mRNA backbone. Located at the interface of the 30S and 50S subunits, it traverses the body of the 30S subunit contacting proteins on the other side and probably holding the rRNA structure together. The combined cluster of proteins S8, S12 and S17 appears to hold together the shoulder and platform of the 30S subunit. This Cytophaga hutchinsonii (strain ATCC 33406 / DSM 1761 / CIP 103989 / NBRC 15051 / NCIMB 9469 / D465) protein is Small ribosomal subunit protein uS12.